The primary structure comprises 88 residues: Small ribosomal subunit protein uS17 (88 aa).

The protein belongs to the universal ribosomal protein uS17 family. As to quaternary structure, part of the 30S ribosomal subunit.

Functionally, one of the primary rRNA binding proteins, it binds specifically to the 5'-end of 16S ribosomal RNA. This chain is Small ribosomal subunit protein uS17, found in Marinobacter nauticus (strain ATCC 700491 / DSM 11845 / VT8) (Marinobacter aquaeolei).